The sequence spans 454 residues: Maintenance of mitochondrial morphology protein 1 (454 aa).

Residues 1 to 117 lie on the Lumenal side of the membrane; the sequence is MESNYTGMDG…SFSSWSFAQG (117 aa). The helical transmembrane segment at 118-138 threads the bilayer; it reads LIVGQVSVVLVLIFFIKFFIF. Residues 139-454 lie on the Cytoplasmic side of the membrane; it reads SDSSTKTNPN…ESEPGRETHY (316 aa). The segment at 144 to 164 is disordered; it reads KTNPNPAKNSSSTNSLSGLSS. A compositionally biased stretch (low complexity) spans 153–164; that stretch reads SSSTNSLSGLSS. Residues 215–427 enclose the SMP-LTD domain; the sequence is PAESLDWFNV…EPRFQFIKLP (213 aa). The a 1,2-diacyl-sn-glycero-3-phosphate site is built by arginine 253, tryptophan 411, arginine 415, tryptophan 430, arginine 432, and serine 433. Positions 434 to 454 are disordered; the sequence is KNTREGKADVDESEPGRETHY. Basic and acidic residues predominate over residues 435 to 454; that stretch reads NTREGKADVDESEPGRETHY.

The protein belongs to the MMM1 family. In terms of assembly, homodimer. Component of the ER-mitochondria encounter structure (ERMES) or MDM complex, composed of MMM1, MDM10, MDM12 and MDM34. An MMM1 homodimer associates with one molecule of MDM12 on each side in a pairwise head-to-tail manner, and the SMP-LTD domains of MMM1 and MDM12 generate a continuous hydrophobic tunnel for phospholipid trafficking.

The protein resides in the endoplasmic reticulum membrane. Its function is as follows. Component of the ERMES/MDM complex, which serves as a molecular tether to connect the endoplasmic reticulum (ER) and mitochondria. Components of this complex are involved in the control of mitochondrial shape and protein biogenesis, and function in nonvesicular lipid trafficking between the ER and mitochondria. Preferentially binds to glycerophospholipids such as phosphatidylcholoine (PC), phosphatidic acid (PA), phosphatidylglycerol (PG), and phosphatidylserine (PS), but not to phosphatidylethanolamine (PE). The MDM12-MMM1 subcomplex functions in the major beta-barrel assembly pathway that is responsible for biogenesis of all outer membrane beta-barrel proteins, and acts in a late step after the SAM complex. The MDM10-MDM12-MMM1 subcomplex further acts in the TOM40-specific pathway after the action of the MDM12-MMM1 complex. Essential for establishing and maintaining the structure of mitochondria and maintenance of mtDNA nucleoids. This is Maintenance of mitochondrial morphology protein 1 from Zygosaccharomyces rouxii (strain ATCC 2623 / CBS 732 / NBRC 1130 / NCYC 568 / NRRL Y-229).